Consider the following 295-residue polypeptide: Aspartate carbamoyltransferase catalytic subunit (295 aa).

Carbamoyl phosphate contacts are provided by Arg49 and Thr50. Lys77 contributes to the L-aspartate binding site. The carbamoyl phosphate site is built by Arg99, His127, and Gln130. 2 residues coordinate L-aspartate: Arg161 and Arg212. Carbamoyl phosphate is bound by residues Gly251 and Pro252.

This sequence belongs to the aspartate/ornithine carbamoyltransferase superfamily. ATCase family. As to quaternary structure, heterododecamer (2C3:3R2) of six catalytic PyrB chains organized as two trimers (C3), and six regulatory PyrI chains organized as three dimers (R2).

The catalysed reaction is carbamoyl phosphate + L-aspartate = N-carbamoyl-L-aspartate + phosphate + H(+). It participates in pyrimidine metabolism; UMP biosynthesis via de novo pathway; (S)-dihydroorotate from bicarbonate: step 2/3. Functionally, catalyzes the condensation of carbamoyl phosphate and aspartate to form carbamoyl aspartate and inorganic phosphate, the committed step in the de novo pyrimidine nucleotide biosynthesis pathway. The protein is Aspartate carbamoyltransferase catalytic subunit of Aliarcobacter butzleri (strain RM4018) (Arcobacter butzleri).